Reading from the N-terminus, the 328-residue chain is uncharacterized protein (328 aa).

The tract at residues 1–22 (MPVKPNQPRPSTKQDPSSGASR) is disordered. Over residues 9–21 (RPSTKQDPSSGAS) the composition is skewed to polar residues. 6 helical membrane-spanning segments follow: residues 66 to 86 (FSFLSLIPILMVSFATAGFVL), 126 to 146 (TVGLTGLLIALYSGVNWIGNL), 176 to 196 (FLSLIGLLLALVITLFLTSVA), 221 to 241 (LIALSISIFANYLLFLWILWV), 255 to 275 (GTLMAAIGFEALKFAMTVALP), and 290 to 310 (IGLMTFFYFFARLTLFCAAWI).

It to E.coli YhjD.

The protein resides in the cell inner membrane. This is an uncharacterized protein from Dickeya dadantii (strain 3937) (Erwinia chrysanthemi (strain 3937)).